Here is a 76-residue protein sequence, read N- to C-terminus: Repressor protein of division inhibition gene dicB (76 aa).

The DNA-binding element occupies 13–33 (KTKLAQAAGIRLASLYSWKGD).

This protein is a repressor of division inhibition gene dicB. This Escherichia coli (strain K12) protein is Repressor protein of division inhibition gene dicB (dicC).